Here is a 350-residue protein sequence, read N- to C-terminus: tRNA uridine(34) hydroxylase (350 aa).

Residues 146 to 240 form the Rhodanese domain; it reads DDPDALFIDM…YARKAREQGL (95 aa). The active-site Cysteine persulfide intermediate is cysteine 200.

It belongs to the TrhO family.

It catalyses the reaction uridine(34) in tRNA + AH2 + O2 = 5-hydroxyuridine(34) in tRNA + A + H2O. In terms of biological role, catalyzes oxygen-dependent 5-hydroxyuridine (ho5U) modification at position 34 in tRNAs. This Escherichia fergusonii (strain ATCC 35469 / DSM 13698 / CCUG 18766 / IAM 14443 / JCM 21226 / LMG 7866 / NBRC 102419 / NCTC 12128 / CDC 0568-73) protein is tRNA uridine(34) hydroxylase.